The chain runs to 320 residues: Tryptophan--tRNA ligase (320 aa).

ATP-binding positions include 8 to 10 and 16 to 17; these read QPT and GN. The 'HIGH' region signature appears at 9–17; that stretch reads PTGRPHWGN. Aspartate 131 contributes to the L-tryptophan binding site. Residues 143-145, valine 182, and 189-193 each bind ATP; these read GVD and KMSKS. Positions 189-193 match the 'KMSKS' region motif; sequence KMSKS.

This sequence belongs to the class-I aminoacyl-tRNA synthetase family. As to quaternary structure, homodimer.

It is found in the cytoplasm. It carries out the reaction tRNA(Trp) + L-tryptophan + ATP = L-tryptophyl-tRNA(Trp) + AMP + diphosphate + H(+). Catalyzes the attachment of tryptophan to tRNA(Trp). This chain is Tryptophan--tRNA ligase, found in Rhodopirellula baltica (strain DSM 10527 / NCIMB 13988 / SH1).